Here is a 255-residue protein sequence, read N- to C-terminus: Imidazole glycerol phosphate synthase subunit HisF (255 aa).

Active-site residues include Asp11 and Asp130.

Belongs to the HisA/HisF family. In terms of assembly, heterodimer of HisH and HisF.

Its subcellular location is the cytoplasm. It carries out the reaction 5-[(5-phospho-1-deoxy-D-ribulos-1-ylimino)methylamino]-1-(5-phospho-beta-D-ribosyl)imidazole-4-carboxamide + L-glutamine = D-erythro-1-(imidazol-4-yl)glycerol 3-phosphate + 5-amino-1-(5-phospho-beta-D-ribosyl)imidazole-4-carboxamide + L-glutamate + H(+). Its pathway is amino-acid biosynthesis; L-histidine biosynthesis; L-histidine from 5-phospho-alpha-D-ribose 1-diphosphate: step 5/9. IGPS catalyzes the conversion of PRFAR and glutamine to IGP, AICAR and glutamate. The HisF subunit catalyzes the cyclization activity that produces IGP and AICAR from PRFAR using the ammonia provided by the HisH subunit. The chain is Imidazole glycerol phosphate synthase subunit HisF from Rhodopseudomonas palustris (strain ATCC BAA-98 / CGA009).